The following is a 196-amino-acid chain: Glutathione-specific gamma-glutamylcyclotransferase 1 (196 aa).

Substrate is bound at residue 15–20; it reads IFGYGS. The active-site Proton acceptor is Glu95.

It belongs to the gamma-glutamylcyclotransferase family. ChaC subfamily.

The protein resides in the cytoplasm. The protein localises to the cytosol. Its subcellular location is the golgi apparatus. It is found in the trans-Golgi network. The catalysed reaction is glutathione = L-cysteinylglycine + 5-oxo-L-proline. Its function is as follows. Catalyzes the cleavage of glutathione into 5-oxo-L-proline and a Cys-Gly dipeptide. Acts specifically on glutathione, but not on other gamma-glutamyl peptides. Glutathione depletion is an important factor for apoptosis initiation and execution. Acts as a pro-apoptotic component of the unfolded protein response pathway by mediating the pro-apoptotic effects of the ATF4-ATF3-DDIT3/CHOP cascade. Negative regulator of Notch signaling pathway involved in embryonic neurogenesis: acts by inhibiting Notch cleavage by furin, maintaining Notch in an immature inactive form, thereby promoting neurogenesis in embryos. The sequence is that of Glutathione-specific gamma-glutamylcyclotransferase 1 from Danio rerio (Zebrafish).